Consider the following 1373-residue polypeptide: Disease resistance protein RRS1 (1373 aa).

A TIR domain is found at 5 to 146 (EKDEEFVCIS…EIVRDVYETH (142 aa)). One can recognise an NB-ARC domain in the interval 170–421 (IGIRCVGIWG…LLEGCGFFPH (252 aa)). Position 179-186 (179-186 (GMPGIGKT)) interacts with ATP. LRR repeat units follow at residues 498 to 522 (SEEIEGLFLDTSNLRFDLQPSAFKN), 535 to 553 (NPEVHPVINFPTGSLHSLP), 554 to 575 (NELRLLHWENYPLKSLPQNFDP), 577 to 598 (HLVEINMPYSQLQKLWGGTKNL), 621 to 646 (AENLEVIDLQGCTRLQNFPAAGRLLR), 665 to 688 (PPNIEKLHLQGTGILALPVSTVKP), 742 to 766 (LPNMANLDLNVLDLSGCSSLNSIQG), 768 to 793 (PRFLKQLYLGGTAIREVPQLPQSLEI), and 831 to 854 (PRNLKELYFAGTTLREVPQLPLSL). A Nuclear localization signal motif is present at residues 988–1005 (RNFHCWAPGKVVPKVRKD). The WRKY DNA-binding region spans 1204–1272 (IPAIDEGDLW…YLSEHNHPRP (69 aa)). The disordered stretch occupies residues 1300-1323 (RVFQNKDEPNKPHLPSSSTPPGNA).

Interacts with PopP2, a R.solanacearum type III effector.

It localises to the nucleus. Transcription factor. Interacts specifically with the W box (5'-(T)TGAC[CT]-3'), a frequently occurring elicitor-responsive cis-acting element. Also acts as a disease resistance protein involved in resistance to fungal and bacterial pathogens, including R.solanacearum, P.syringae pv. tomato and C.higginsianum. In presence of RPS4, elicites an EDS1-dependent hypersensitive response. The chain is Disease resistance protein RRS1 from Arabidopsis thaliana (Mouse-ear cress).